Consider the following 347-residue polypeptide: tRNA dimethylallyltransferase (347 aa).

20–27 (GPTASGKT) lines the ATP pocket. Substrate is bound at residue 22–27 (TASGKT). Interaction with substrate tRNA regions lie at residues 45–48 (DSAM), 169–173 (QRLMR), and 275–280 (RCVGYR).

Belongs to the IPP transferase family. In terms of assembly, monomer. Mg(2+) is required as a cofactor.

The enzyme catalyses adenosine(37) in tRNA + dimethylallyl diphosphate = N(6)-dimethylallyladenosine(37) in tRNA + diphosphate. Its function is as follows. Catalyzes the transfer of a dimethylallyl group onto the adenine at position 37 in tRNAs that read codons beginning with uridine, leading to the formation of N6-(dimethylallyl)adenosine (i(6)A). This Marinobacter nauticus (strain ATCC 700491 / DSM 11845 / VT8) (Marinobacter aquaeolei) protein is tRNA dimethylallyltransferase.